We begin with the raw amino-acid sequence, 375 residues long: CCA-adding enzyme (375 aa).

ATP contacts are provided by Gly8 and Arg11. Positions 8 and 11 each coordinate CTP. Mg(2+) is bound by residues Asp21 and Asp23. Residues Arg91, Arg137, and Arg140 each coordinate ATP. CTP is bound by residues Arg91, Arg137, and Arg140.

Belongs to the tRNA nucleotidyltransferase/poly(A) polymerase family. Bacterial CCA-adding enzyme type 2 subfamily. Mg(2+) is required as a cofactor.

The catalysed reaction is a tRNA precursor + 2 CTP + ATP = a tRNA with a 3' CCA end + 3 diphosphate. It catalyses the reaction a tRNA with a 3' CCA end + 2 CTP + ATP = a tRNA with a 3' CCACCA end + 3 diphosphate. Functionally, catalyzes the addition and repair of the essential 3'-terminal CCA sequence in tRNAs without using a nucleic acid template. Adds these three nucleotides in the order of C, C, and A to the tRNA nucleotide-73, using CTP and ATP as substrates and producing inorganic pyrophosphate. tRNA 3'-terminal CCA addition is required both for tRNA processing and repair. Also involved in tRNA surveillance by mediating tandem CCA addition to generate a CCACCA at the 3' terminus of unstable tRNAs. While stable tRNAs receive only 3'-terminal CCA, unstable tRNAs are marked with CCACCA and rapidly degraded. The protein is CCA-adding enzyme of Pseudomonas entomophila (strain L48).